We begin with the raw amino-acid sequence, 573 residues long: Urease subunit alpha 2 (573 aa).

One can recognise a Urease domain in the interval 136 to 573 (GAIDAHVHLI…LPMAQRYFLF (438 aa)). Residues His141, His143, and Lys224 each coordinate Ni(2+). At Lys224 the chain carries N6-carboxylysine. His226 is a binding site for substrate. Residues His253 and His279 each contribute to the Ni(2+) site. His327 serves as the catalytic Proton donor. Asp367 contacts Ni(2+).

The protein belongs to the metallo-dependent hydrolases superfamily. Urease alpha subunit family. May form a heterohexamer of 3 UreC (alpha) and 3 UreAB (gamma/beta) subunits. May also form a heterotrimer of UreA (gamma), UreB (beta) and UreC (alpha) subunits. Three heterotrimers associate to form the active enzyme. Ni cation is required as a cofactor. In terms of processing, carboxylation allows a single lysine to coordinate two nickel ions.

Its subcellular location is the cytoplasm. The catalysed reaction is urea + 2 H2O + H(+) = hydrogencarbonate + 2 NH4(+). The protein operates within nitrogen metabolism; urea degradation; CO(2) and NH(3) from urea (urease route): step 1/1. This Streptomyces avermitilis (strain ATCC 31267 / DSM 46492 / JCM 5070 / NBRC 14893 / NCIMB 12804 / NRRL 8165 / MA-4680) protein is Urease subunit alpha 2.